The following is a 437-amino-acid chain: Arginine biosynthesis bifunctional protein ArgJ, mitochondrial (437 aa).

Substrate-binding residues include Thr-173, Lys-200, Thr-211, Glu-297, Asn-432, and Ser-437. Residue Thr-211 is the Nucleophile of the active site.

This sequence belongs to the ArgJ family. As to quaternary structure, heterodimer of an alpha and a beta chain. The alpha and beta chains are autoproteolytically processed from a single precursor protein within the mitochondrion.

The protein localises to the mitochondrion matrix. It catalyses the reaction N(2)-acetyl-L-ornithine + L-glutamate = N-acetyl-L-glutamate + L-ornithine. It carries out the reaction L-glutamate + acetyl-CoA = N-acetyl-L-glutamate + CoA + H(+). It functions in the pathway amino-acid biosynthesis; L-arginine biosynthesis; L-ornithine and N-acetyl-L-glutamate from L-glutamate and N(2)-acetyl-L-ornithine (cyclic): step 1/1. The protein operates within amino-acid biosynthesis; L-arginine biosynthesis; N(2)-acetyl-L-ornithine from L-glutamate: step 1/4. In terms of biological role, catalyzes two activities which are involved in the cyclic version of arginine biosynthesis: the synthesis of acetylglutamate from glutamate and acetyl-CoA, and of ornithine by transacetylation between acetylornithine and glutamate. In Zygosaccharomyces rouxii (strain ATCC 2623 / CBS 732 / NBRC 1130 / NCYC 568 / NRRL Y-229), this protein is Arginine biosynthesis bifunctional protein ArgJ, mitochondrial.